The sequence spans 367 residues: Alanine racemase (367 aa).

K40 serves as the catalytic Proton acceptor; specific for D-alanine. The residue at position 40 (K40) is an N6-(pyridoxal phosphate)lysine. A substrate-binding site is contributed by R136. Y263 (proton acceptor; specific for L-alanine) is an active-site residue. M310 is a substrate binding site.

It belongs to the alanine racemase family. The cofactor is pyridoxal 5'-phosphate.

It catalyses the reaction L-alanine = D-alanine. Its pathway is amino-acid biosynthesis; D-alanine biosynthesis; D-alanine from L-alanine: step 1/1. In terms of biological role, catalyzes the interconversion of L-alanine and D-alanine. May also act on other amino acids. This Streptococcus thermophilus (strain ATCC BAA-491 / LMD-9) protein is Alanine racemase (alr).